Consider the following 878-residue polypeptide: Leucine--tRNA ligase (878 aa).

The span at 1–14 (MTASKSSSATASAS) shows a compositional bias: low complexity. The disordered stretch occupies residues 1–23 (MTASKSSSATASASDRPDRYDPI). The 'HIGH' region motif lies at 58–68 (PYPSGSLHMGH). The 'KMSKS' region signature appears at 632–636 (KMSKS). ATP is bound at residue lysine 635.

It belongs to the class-I aminoacyl-tRNA synthetase family.

The protein localises to the cytoplasm. The enzyme catalyses tRNA(Leu) + L-leucine + ATP = L-leucyl-tRNA(Leu) + AMP + diphosphate. The sequence is that of Leucine--tRNA ligase from Synechococcus sp. (strain WH7803).